Consider the following 190-residue polypeptide: Peptidyl-tRNA hydrolase (190 aa).

Tyr14 lines the tRNA pocket. His19 functions as the Proton acceptor in the catalytic mechanism. 3 residues coordinate tRNA: Tyr63, Asn65, and Asn112.

The protein belongs to the PTH family. As to quaternary structure, monomer.

It is found in the cytoplasm. It carries out the reaction an N-acyl-L-alpha-aminoacyl-tRNA + H2O = an N-acyl-L-amino acid + a tRNA + H(+). Functionally, hydrolyzes ribosome-free peptidyl-tRNAs (with 1 or more amino acids incorporated), which drop off the ribosome during protein synthesis, or as a result of ribosome stalling. Its function is as follows. Catalyzes the release of premature peptidyl moieties from peptidyl-tRNA molecules trapped in stalled 50S ribosomal subunits, and thus maintains levels of free tRNAs and 50S ribosomes. In Kosmotoga olearia (strain ATCC BAA-1733 / DSM 21960 / TBF 19.5.1), this protein is Peptidyl-tRNA hydrolase.